The primary structure comprises 241 residues: tRNA (guanine-N(7)-)-methyltransferase (241 aa).

S-adenosyl-L-methionine is bound by residues Gly-61, Glu-84, Arg-86, Asn-117, Ala-118, and Leu-137. Asp-140 is an active-site residue. An alphaC helix region spans residues 141-149 (PHFKKTKHK). The S-adenosyl-L-methionine site is built by Thr-215 and Glu-217. The interval 215–223 (TEEGKKVQR) is alpha6 helix.

The protein belongs to the class I-like SAM-binding methyltransferase superfamily. TrmB family. As to quaternary structure, catalytic component of the METTL1-WDR4 complex, composed of mettl1 and wdr4.

It localises to the nucleus. The catalysed reaction is guanosine(46) in tRNA + S-adenosyl-L-methionine = N(7)-methylguanosine(46) in tRNA + S-adenosyl-L-homocysteine. It carries out the reaction a guanosine in mRNA + S-adenosyl-L-methionine = an N(7)-methylguanosine in mRNA + S-adenosyl-L-homocysteine. It catalyses the reaction a guanosine in miRNA + S-adenosyl-L-methionine = an N(7)-methylguanosine in miRNA + S-adenosyl-L-homocysteine. It participates in tRNA modification; N(7)-methylguanine-tRNA biosynthesis. Functionally, catalytic component of METTL1-WDR4 methyltransferase complex that mediates the formation of N(7)-methylguanine in a subset of RNA species, such as tRNAs, mRNAs and microRNAs (miRNAs). Catalyzes the formation of N(7)-methylguanine at position 46 (m7G46) in a large subset of tRNAs that contain the 5'-RAGGU-3' motif within the variable loop. M7G46 interacts with C13-G22 in the D-loop to stabilize tRNA tertiary structure and protect tRNAs from decay. Also acts as a methyltransferase for a subset of internal N(7)-methylguanine in mRNAs. Internal N(7)-methylguanine methylation of mRNAs in response to stress promotes their relocalization to stress granules, thereby suppressing their translation. Also methylates a specific subset of miRNAs. The sequence is that of tRNA (guanine-N(7)-)-methyltransferase (mettl1) from Danio rerio (Zebrafish).